The sequence spans 332 residues: Trans-2'-carboxybenzalpyruvate hydratase-aldolase (332 aa).

Residue Lys178 is the Schiff-base intermediate with substrate of the active site.

Belongs to the DapA family. In terms of assembly, homotrimer.

It catalyses the reaction (3Z)-4-(2-carboxyphenyl)-2-oxobut-3-enoate + H2O = 2-formylbenzoate + pyruvate. Not inhibited by sodium borohydride or sodium pyruvate. Unaffected by EDTA, EGTA, Mn(2+), Mg(2+) and Ca(2+). Functionally, plays a role in phenanthrene catabolism. Catalyzes the transformation of trans-2'-carboxbenzalpyruvate to 2-formylbenzoate and pyruvate. The protein is Trans-2'-carboxybenzalpyruvate hydratase-aldolase of Nocardioides sp. (strain KP7).